Here is a 900-residue protein sequence, read N- to C-terminus: Nonribosomal peptide synthetase AMT10 (900 aa).

The segment at 284–686 (KQAQQNPAAM…ARRNGYIKLR (403 aa)) is adenylation. A Carrier domain is found at 824-900 (ELQSDMERYL…QMARNCSLLD (77 aa)). S861 carries the O-(pantetheine 4'-phosphoryl)serine modification.

This sequence belongs to the NRP synthetase family.

It functions in the pathway mycotoxin biosynthesis. Its function is as follows. Nonribosomal peptide synthetase; part of the gene clusters that mediate the biosynthesis of AM-toxins, host-selective toxins (HSTs) causing Alternaria blotch on apple, a worldwide distributed disease. AM-toxins are cyclic depsipeptides containing the 3 residues 2-hydroxy-isovaleric acid (2-HIV), dehydroalanine, L-alanine which are common for all 3 AM-toxins I to III. The fourth precursor is L-alpha-amino-methoxyphenyl-valeric acid (L-Amv) for AM-toxin I, L-alpha-amino-phenyl-valeric acid (L-Apv) for AM-toxin II, and L-alpha-amino-hydroxyphenyl-valeric acid (L-Ahv) for AM-toxin III. AM-toxins have two target sites for affecting susceptible apple cells; they cause invagination of the plasma membrane and electrolyte loss and chloroplast disorganization. The non-ribosomal peptide synthetase AMT1 contains 4 catalytic modules and is responsible for activation of each residue in AM-toxin. The aldo-keto reductase AMT2 catalyzes the conversion of 2-keto-isovaleric acid (2-KIV) to 2-hydroxy-isovaleric acid (2-HIV), one of the precursor residues incorporated by AMT1 during AM-toxin biosynthesis, by reduction of its ketone to an alcohol. The cytochrome P450 monooxygenase AMT3 and the thioesterase AMT4 are also important for AM-toxin production, but their exact function within the AM-toxin biosynthesis are not known yet. Up to 21 proteins (including AMT1 to AMT4) are predicted to be involved in AM-toxin biosynthesis since their expression ishighly up-regulated in AM-toxin-producing cultures. The sequence is that of Nonribosomal peptide synthetase AMT10 from Alternaria alternata (Alternaria rot fungus).